The chain runs to 241 residues: MRIPLLAPDNYAFPDPAYALARCDGLVGVSRDLDAGRLLEAYRNGVFPWFLRDGWFFWYAVGPRAVIVPERLHVPRSLEKTLRNCSYRVTVNGCFAEVVAHCAAAVRPNQDGTWIAPEFQTAYLKLHEMGYAHSFECHYPDENGKTRLAGGFYGVQIGRVFYGESMFALQPDASKIAFACAVPFLASLGVELIDCQQDTGHMRRFGSELLPFADFAERLRMLNAVPLKEEIGRREVACKGL.

The protein belongs to the L/F-transferase family.

Its subcellular location is the cytoplasm. The enzyme catalyses N-terminal L-lysyl-[protein] + L-leucyl-tRNA(Leu) = N-terminal L-leucyl-L-lysyl-[protein] + tRNA(Leu) + H(+). It catalyses the reaction N-terminal L-arginyl-[protein] + L-leucyl-tRNA(Leu) = N-terminal L-leucyl-L-arginyl-[protein] + tRNA(Leu) + H(+). The catalysed reaction is L-phenylalanyl-tRNA(Phe) + an N-terminal L-alpha-aminoacyl-[protein] = an N-terminal L-phenylalanyl-L-alpha-aminoacyl-[protein] + tRNA(Phe). In terms of biological role, functions in the N-end rule pathway of protein degradation where it conjugates Leu, Phe and, less efficiently, Met from aminoacyl-tRNAs to the N-termini of proteins containing an N-terminal arginine or lysine. This Neisseria meningitidis serogroup C / serotype 2a (strain ATCC 700532 / DSM 15464 / FAM18) protein is Leucyl/phenylalanyl-tRNA--protein transferase.